The following is a 239-amino-acid chain: Large ribosomal subunit protein uL1 (239 aa).

The protein belongs to the universal ribosomal protein uL1 family. Part of the 50S ribosomal subunit.

Functionally, binds directly to 23S rRNA. The L1 stalk is quite mobile in the ribosome, and is involved in E site tRNA release. Protein L1 is also a translational repressor protein, it controls the translation of the L11 operon by binding to its mRNA. The protein is Large ribosomal subunit protein uL1 of Rickettsia conorii (strain ATCC VR-613 / Malish 7).